The chain runs to 264 residues: Claudin-18 (264 aa).

Over Met-1–Cys-6 the chain is Cytoplasmic. A helical membrane pass occupies residues Gln-7 to Met-27. Residues Asp-28–Arg-80 lie on the Extracellular side of the membrane. The helical transmembrane segment at Ala-81–Leu-101 threads the bilayer. At Lys-102 to Gly-122 the chain is on the cytoplasmic side. A helical transmembrane segment spans residues Ile-123–Leu-143. Residues Val-144–Ala-176 are Extracellular-facing. The chain crosses the membrane as a helical span at residues Ala-177–Ile-197. Over Ala-198–Val-264 the chain is Cytoplasmic. A required for role in regulation of RANKL-induced osteoclast differentiation region spans residues Ala-198–Val-264. Ser-217 is modified (phosphoserine). A disordered region spans residues Lys-241 to Val-264. Over residues Lys-242–Val-264 the composition is skewed to basic and acidic residues.

It belongs to the claudin family. Interacts with TJP2/ZO-2. Interacts with TJP1/ZO-1. Interacts with YAP1 (phosphorylated); the interaction sequesters YAP1 away from the nucleus and thereby restricts transcription of YAP1 target genes. In terms of assembly, interacts with CLDN19. Expressed in the lung (at protein level). In terms of tissue distribution, expressed in lung. Expressed in the stomach. As to expression, expressed in lung. Expressed in stomach. Expressed in bone. In terms of tissue distribution, expressed in stomach.

Its subcellular location is the cell junction. It localises to the tight junction. It is found in the cell membrane. The protein localises to the lateral cell membrane. Functionally, involved in alveolar fluid homeostasis via regulation of alveolar epithelial tight junction composition and therefore ion transport and solute permeability, potentially via downstream regulation of the actin cytoskeleton organization and beta-2-adrenergic signaling. Required for lung alveolarization and maintenance of the paracellular alveolar epithelial barrier. Acts to maintain epithelial progenitor cell proliferation and organ size, via regulation of YAP1 localization away from the nucleus and thereby restriction of YAP1 target gene transcription. Acts as a negative regulator of RANKL-induced osteoclast differentiation, potentially via relocation of TJP2/ZO-2 away from the nucleus, subsequently involved in bone resorption in response to calcium deficiency. Mediates the osteoprotective effects of estrogen, potentially via acting downstream of estrogen signaling independently of RANKL signaling pathways. Its function is as follows. Involved in the maintenance of homeostasis of the alveolar microenvironment via regulation of pH and subsequent T-cell activation in the alveolar space, is therefore indirectly involved in limiting C.neoformans infection. Required for the formation of the gastric paracellular barrier via its role in tight junction formation, thereby involved in the response to gastric acidification. The polypeptide is Claudin-18 (Cldn18) (Mus musculus (Mouse)).